Reading from the N-terminus, the 91-residue chain is Mercuric transport protein periplasmic component (91 aa).

Positions 1-19 (MKKLFAALALAAVVAPVWA) are cleaved as a signal peptide. Residues 22 to 88 (QTVTLSVPGM…ATGDAGYPSS (67 aa)) form the HMA domain. Residues Cys33 and Cys36 each contribute to the Hg(2+) site.

The protein belongs to the MerP family. In terms of assembly, monomer.

It localises to the periplasm. Functionally, involved in mercury resistance. Acts as a mercury scavenger that specifically binds to a mercuric ion in the periplasm and probably passes it to the cytoplasmic mercuric reductase MerA via the mercuric transport protein MerT. In Alcaligenes sp, this protein is Mercuric transport protein periplasmic component (merP).